Here is a 497-residue protein sequence, read N- to C-terminus: tRNA (adenine(58)-N(1))-methyltransferase non-catalytic subunit TRM6 (497 aa).

The interval 81 to 103 (LEEPASETKEAGTDNRNIVDDGK) is disordered. The segment at 95 to 105 (NRNIVDDGKSQ) is substrate. Thr108 is subject to Phosphothreonine. 2 substrate regions span residues 146–155 (KYIKKKKKKY) and 176–183 (REPGKINH). The segment at 275 to 354 (MLSSEPKDST…EKQRRQEEQR (80 aa)) is disordered. The segment covering 289–307 (SNGELEEKEIAEQADEDNI) has biased composition (acidic residues). Over residues 328–354 (PENKEPKEKRSKRDYIQEKQRRQEEQR) the composition is skewed to basic and acidic residues. Substrate contacts are provided by Arg349 and Arg377. Substrate regions lie at residues 415-423 (RERGGVINL) and 434-441 (QVLPDRSH). Positions 474-497 (TGALDPHKAEEPAAKKQKCMESAS) are disordered. Residues 478–487 (DPHKAEEPAA) show a composition bias toward basic and acidic residues.

The protein belongs to the TRM6/GCD10 family. Heterotetramer; composed of two copies of TRMT6 and two copies of TRMT61A.

The protein localises to the nucleus. Functionally, substrate-binding subunit of tRNA (adenine-N(1)-)-methyltransferase, which catalyzes the formation of N(1)-methyladenine at position 58 (m1A58) in initiator methionyl-tRNA. Together with the TRMT61A catalytic subunit, part of a mRNA N(1)-methyltransferase complex that mediates methylation of adenosine residues at the N(1) position of a small subset of mRNAs: N(1) methylation takes place in tRNA T-loop-like structures of mRNAs and is only present at low stoichiometries. This is tRNA (adenine(58)-N(1))-methyltransferase non-catalytic subunit TRM6 (Trmt6) from Mus musculus (Mouse).